We begin with the raw amino-acid sequence, 151 residues long: Small ribosomal subunit protein uS13 (151 aa).

Belongs to the universal ribosomal protein uS13 family. Part of the 30S ribosomal subunit. Forms a loose heterodimer with protein S19. Forms two bridges to the 50S subunit in the 70S ribosome.

In terms of biological role, located at the top of the head of the 30S subunit, it contacts several helices of the 16S rRNA. In the 70S ribosome it contacts the 23S rRNA (bridge B1a) and protein L5 of the 50S subunit (bridge B1b), connecting the 2 subunits; these bridges are implicated in subunit movement. The sequence is that of Small ribosomal subunit protein uS13 from Staphylothermus marinus (strain ATCC 43588 / DSM 3639 / JCM 9404 / F1).